Here is a 291-residue protein sequence, read N- to C-terminus: Taste receptor type 2 member 16 (291 aa).

Position 1 (M1) is a topological domain, extracellular. A helical membrane pass occupies residues 2–22 (IPIQLTVFFMIIYVLESLTII). Topologically, residues 23–41 (VQSSLIVAVLGREWLQVRR) are cytoplasmic. Residues 42-62 (LMPVDMILISLGISRFCLQWA) form a helical membrane-spanning segment. Residues 63-84 (SMLNNFCSYLNLNYVLCNLTIT) lie on the Extracellular side of the membrane. A glycan (N-linked (GlcNAc...) asparagine) is linked at N80. The helical transmembrane segment at 85 to 105 (WEFFNILTFWLNSLLTVFYCI) threads the bilayer. Over 106–125 (KVSSFTHHIFLWVRWRILRW) the chain is Cytoplasmic. Residues 126 to 146 (FPWILLGSLTIACVTIIPSAI) traverse the membrane as a helical segment. The Extracellular portion of the chain corresponds to 147 to 182 (GNYIQIQLLTMEHLPRNSTVTDRLEKFHQYQFQSHT). N163 carries an N-linked (GlcNAc...) asparagine glycan. Residues 183 to 203 (VALVIPFILFLASTILLMASL) form a helical membrane-spanning segment. Over 204-228 (TKQIQHHSTGHCNPSMKAHFTALRS) the chain is Cytoplasmic. The helical transmembrane segment at 229–249 (LAILFIVFTSYFLIILITIIG) threads the bilayer. Residues 250-257 (TLFDKRCW) lie on the Extracellular side of the membrane. Residues 258 to 278 (LWVWEAFVYAFILMHSTSLML) traverse the membrane as a helical segment. Topologically, residues 279–291 (SSPTLKRILKGKC) are cytoplasmic.

This sequence belongs to the G-protein coupled receptor T2R family. As to quaternary structure, interacts with RTP3 and RTP4.

It localises to the cell membrane. In terms of biological role, receptor that may play a role in the perception of bitterness and is gustducin-linked. May function as a bitter taste receptor for the phytonutrient beta glucopyranosides, some of which are toxic and some of which lower the risk of cancer and cardiovascular disease. The activity of this receptor may stimulate alpha gustducin, mediate PLC-beta-2 activation and lead to the gating of TRPM5. The chain is Taste receptor type 2 member 16 (TAS2R16) from Pongo pygmaeus (Bornean orangutan).